The sequence spans 305 residues: 4-hydroxy-tetrahydrodipicolinate synthase 1 (305 aa).

Thr53 is a binding site for pyruvate. Tyr141 functions as the Proton donor/acceptor in the catalytic mechanism. Lys169 functions as the Schiff-base intermediate with substrate in the catalytic mechanism. Val209 lines the pyruvate pocket.

This sequence belongs to the DapA family. In terms of assembly, homotetramer; dimer of dimers.

The protein localises to the cytoplasm. It catalyses the reaction L-aspartate 4-semialdehyde + pyruvate = (2S,4S)-4-hydroxy-2,3,4,5-tetrahydrodipicolinate + H2O + H(+). The protein operates within amino-acid biosynthesis; L-lysine biosynthesis via DAP pathway; (S)-tetrahydrodipicolinate from L-aspartate: step 3/4. Catalyzes the condensation of (S)-aspartate-beta-semialdehyde [(S)-ASA] and pyruvate to 4-hydroxy-tetrahydrodipicolinate (HTPA). The chain is 4-hydroxy-tetrahydrodipicolinate synthase 1 from Streptomyces coelicolor (strain ATCC BAA-471 / A3(2) / M145).